A 326-amino-acid chain; its full sequence is Peroxidase 3 (326 aa).

Residues 1-24 (MNCLIAIALSVSFFLVGIVGPIQA) form the signal peptide. Intrachain disulfides connect Cys-35/Cys-113, Cys-68/Cys-73, Cys-119/Cys-321, and Cys-198/Cys-231. The active-site Proton acceptor is His-66. Ca(2+)-binding residues include Asp-67, Val-70, Gly-72, Asp-74, and Ser-76. N-linked (GlcNAc...) asparagine glycans are attached at residues Asn-80 and Asn-138. Substrate is bound at residue Pro-161. An N-linked (GlcNAc...) asparagine glycan is attached at Asn-166. His-191 provides a ligand contact to heme b. Thr-192 contributes to the Ca(2+) binding site. N-linked (GlcNAc...) asparagine glycosylation is found at Asn-207 and Asn-237. Ca(2+)-binding residues include Asp-244, Ser-247, and Asp-252.

The protein belongs to the peroxidase family. Classical plant (class III) peroxidase subfamily. Heme b is required as a cofactor. It depends on Ca(2+) as a cofactor. In terms of tissue distribution, expressed in root cells.

The protein resides in the secreted. It catalyses the reaction 2 a phenolic donor + H2O2 = 2 a phenolic radical donor + 2 H2O. Functionally, removal of H(2)O(2), oxidation of toxic reductants, biosynthesis and degradation of lignin, suberization, auxin catabolism, response to environmental stresses such as wounding, pathogen attack and oxidative stress. These functions might be dependent on each isozyme/isoform in each plant tissue. The chain is Peroxidase 3 (PER3) from Arabidopsis thaliana (Mouse-ear cress).